The primary structure comprises 471 residues: Glutamate--tRNA ligase (471 aa).

A 'HIGH' region motif is present at residues Pro9–Gly19. Zn(2+) is bound by residues Cys98, Cys100, Cys125, and His127. Residues Lys237–Arg241 carry the 'KMSKS' region motif. Residue Lys240 participates in ATP binding.

It belongs to the class-I aminoacyl-tRNA synthetase family. Glutamate--tRNA ligase type 1 subfamily. Monomer. Zn(2+) serves as cofactor.

The protein localises to the cytoplasm. The catalysed reaction is tRNA(Glu) + L-glutamate + ATP = L-glutamyl-tRNA(Glu) + AMP + diphosphate. Catalyzes the attachment of glutamate to tRNA(Glu) in a two-step reaction: glutamate is first activated by ATP to form Glu-AMP and then transferred to the acceptor end of tRNA(Glu). This Cronobacter sakazakii (strain ATCC BAA-894) (Enterobacter sakazakii) protein is Glutamate--tRNA ligase.